Here is a 169-residue protein sequence, read N- to C-terminus: MNNEILPRNFYERPTLVVAGELLGKILKFSNFSGVITEVEAYIGMDDPACHAARGYTDRTSVMFGIPGFSYVYFIYGMYYCLNIVTETEGFPAAVLIRGLKLIEPLKANLSGPGILCKRLNITREHNKLDLTISHEFCVYESHINLDYVCTPRIGISKGKEKFWRFKIF.

This sequence belongs to the DNA glycosylase MPG family.

The protein is Putative 3-methyladenine DNA glycosylase of Wolbachia sp. subsp. Brugia malayi (strain TRS).